A 394-amino-acid polypeptide reads, in one-letter code: 1-deoxy-D-xylulose 5-phosphate reductoisomerase (394 aa).

Residues threonine 13, glycine 14, threonine 15, isoleucine 16, and asparagine 125 each coordinate NADPH. Position 126 (lysine 126) interacts with 1-deoxy-D-xylulose 5-phosphate. An NADPH-binding site is contributed by glutamate 127. Residue aspartate 151 coordinates Mn(2+). 1-deoxy-D-xylulose 5-phosphate-binding residues include serine 152, glutamate 153, serine 182, and histidine 205. A Mn(2+)-binding site is contributed by glutamate 153. Position 211 (glycine 211) interacts with NADPH. Positions 218, 223, 224, and 227 each coordinate 1-deoxy-D-xylulose 5-phosphate. Position 227 (glutamate 227) interacts with Mn(2+).

Belongs to the DXR family. Mg(2+) is required as a cofactor. It depends on Mn(2+) as a cofactor.

The enzyme catalyses 2-C-methyl-D-erythritol 4-phosphate + NADP(+) = 1-deoxy-D-xylulose 5-phosphate + NADPH + H(+). The protein operates within isoprenoid biosynthesis; isopentenyl diphosphate biosynthesis via DXP pathway; isopentenyl diphosphate from 1-deoxy-D-xylulose 5-phosphate: step 1/6. In terms of biological role, catalyzes the NADPH-dependent rearrangement and reduction of 1-deoxy-D-xylulose-5-phosphate (DXP) to 2-C-methyl-D-erythritol 4-phosphate (MEP). This is 1-deoxy-D-xylulose 5-phosphate reductoisomerase from Methylobacillus flagellatus (strain ATCC 51484 / DSM 6875 / VKM B-1610 / KT).